Reading from the N-terminus, the 341-residue chain is D-erythrose-4-phosphate dehydrogenase (341 aa).

Residue arginine 14 to isoleucine 15 coordinates NAD(+). Residues serine 156–threonine 158, arginine 202, threonine 215–arginine 216, and arginine 238 contribute to the substrate site. The active-site Nucleophile is the cysteine 157. Asparagine 320 contributes to the NAD(+) binding site.

It belongs to the glyceraldehyde-3-phosphate dehydrogenase family. Epd subfamily. As to quaternary structure, homotetramer.

The protein resides in the cytoplasm. It catalyses the reaction D-erythrose 4-phosphate + NAD(+) + H2O = 4-phospho-D-erythronate + NADH + 2 H(+). It participates in cofactor biosynthesis; pyridoxine 5'-phosphate biosynthesis; pyridoxine 5'-phosphate from D-erythrose 4-phosphate: step 1/5. Functionally, catalyzes the NAD-dependent conversion of D-erythrose 4-phosphate to 4-phosphoerythronate. This chain is D-erythrose-4-phosphate dehydrogenase, found in Idiomarina loihiensis (strain ATCC BAA-735 / DSM 15497 / L2-TR).